Here is a 245-residue protein sequence, read N- to C-terminus: uncharacterized protein (245 aa).

This is an uncharacterized protein from Bacillus subtilis (strain 168).